The primary structure comprises 424 residues: CinA-like protein (424 aa).

This sequence belongs to the CinA family.

The chain is CinA-like protein from Shewanella woodyi (strain ATCC 51908 / MS32).